The sequence spans 277 residues: 5'-nucleotidase SurE (277 aa).

The a divalent metal cation site is built by aspartate 14, aspartate 15, serine 46, and asparagine 104.

The protein belongs to the SurE nucleotidase family. Requires a divalent metal cation as cofactor.

Its subcellular location is the cytoplasm. It carries out the reaction a ribonucleoside 5'-phosphate + H2O = a ribonucleoside + phosphate. Functionally, nucleotidase that shows phosphatase activity on nucleoside 5'-monophosphates. The polypeptide is 5'-nucleotidase SurE (Picosynechococcus sp. (strain ATCC 27264 / PCC 7002 / PR-6) (Agmenellum quadruplicatum)).